The primary structure comprises 253 residues: Short-chain dehydrogenase/reductase ATR9 (253 aa).

Residues Ser-15, Ser-16, Ile-18, Ser-38, Asn-39, Arg-42, Asp-65, and Lys-129 each coordinate NADP(+). Ser-147 (proton donor) is an active-site residue. Thr-194 contacts NADP(+).

Belongs to the short-chain dehydrogenases/reductases (SDR) family.

It functions in the pathway mycotoxin biosynthesis. Its function is as follows. Short-chain dehydrogenase/reductase; part of the core atranone cluster (CAC) which products are predicted to catalyze most or all steps of mycotoxin atranone synthesis, starting from geranylgeranyl pyrophosphate (GGPP). The initial cyclization of GGPP to dolabellane is probably performed by the terpene cyclase ATR13. The Baeyer-Villiger oxidation near the end of the atranone synthesis, which converts atranones D and E to atranones F and G is predicted to be catalyzed by the monooxygenase ATR8. Of the CAC's other predicted gene products, the reducing PKS ATR6 might synthesize a polyketide chain. This polyketide is probably transferred onto the atranone backbone by the polyketide transferase ATR5. Other predicted CAC products include 4 oxygenases (ATR2, ATR3, ATR4, and ATR14), 3 short-chain reductases (ATR7, ATR9, and ATR10), and a methyltransferase (ATR12). These may all be involved in the various steps of atranone biosynthesis, although their specific roles must await experimental determination. The polypeptide is Short-chain dehydrogenase/reductase ATR9 (Stachybotrys chlorohalonatus (strain IBT 40285)).